We begin with the raw amino-acid sequence, 240 residues long: tRNA (guanine-N(7)-)-methyltransferase (240 aa).

Polar residues predominate over residues 1-10; it reads MTESQDTPIT. Residues 1–20 are disordered; sequence MTESQDTPITTDGEARPHRR. Residues Glu-70, Glu-95, Asp-122, and Asp-145 each contribute to the S-adenosyl-L-methionine site. Residue Asp-145 is part of the active site. Substrate contacts are provided by residues Lys-149, Asp-181, and 218-221; that span reads TKFE.

The protein belongs to the class I-like SAM-binding methyltransferase superfamily. TrmB family.

It carries out the reaction guanosine(46) in tRNA + S-adenosyl-L-methionine = N(7)-methylguanosine(46) in tRNA + S-adenosyl-L-homocysteine. It participates in tRNA modification; N(7)-methylguanine-tRNA biosynthesis. Catalyzes the formation of N(7)-methylguanine at position 46 (m7G46) in tRNA. The chain is tRNA (guanine-N(7)-)-methyltransferase from Pseudomonas putida (strain W619).